A 63-amino-acid polypeptide reads, in one-letter code: Small ribosomal subunit protein eS27 (63 aa).

Zn(2+) is bound by residues C18, C21, C37, and C40. A C4-type zinc finger spans residues 18–40 (CIDCGNEQIVFSHPATKVRCLIC).

This sequence belongs to the eukaryotic ribosomal protein eS27 family. Part of the 30S ribosomal subunit. The cofactor is Zn(2+).

In Pyrococcus furiosus (strain ATCC 43587 / DSM 3638 / JCM 8422 / Vc1), this protein is Small ribosomal subunit protein eS27.